The chain runs to 95 residues: Gas vesicle protein S (95 aa).

It belongs to the gas vesicle GvpA family.

The protein localises to the gas vesicle. Its function is as follows. Probably a minor component of the gas vesicle. It is not clear what function gas vesicles perform in soil bacteria. In terms of biological role, when a minimal gvp locus (gvpA2-gvpR-gvpN-gvpF-gvpG-gvpL-gvpS-gvpK-gvpJ-gvpT-gvpU, called pNL29) is expressed in E.coli gas vesicles are made. The protein is Gas vesicle protein S of Priestia megaterium (Bacillus megaterium).